The sequence spans 145 residues: Large ribosomal subunit protein uL15 (145 aa).

The interval 1-43 (MRLNTIKPGAGSKSAAKRVGRGIGSGLGKTCGRGHKGQKSRAG) is disordered. Over residues 21–31 (RGIGSGLGKTC) the composition is skewed to gly residues.

Belongs to the universal ribosomal protein uL15 family. As to quaternary structure, part of the 50S ribosomal subunit.

Functionally, binds to the 23S rRNA. This is Large ribosomal subunit protein uL15 from Aromatoleum aromaticum (strain DSM 19018 / LMG 30748 / EbN1) (Azoarcus sp. (strain EbN1)).